The following is a 134-amino-acid chain: UPF0412 protein YaaI (134 aa).

The first 23 residues, 1–23 (MRSVLTISVGLLFGLALSSVAHA), serve as a signal peptide directing secretion.

The protein belongs to the UPF0412 family.

The chain is UPF0412 protein YaaI from Salmonella paratyphi A (strain ATCC 9150 / SARB42).